The chain runs to 145 residues: Hemoglobin subunit beta-A (145 aa).

Positions 1–145 constitute a Globin domain; sequence MLTAEEKAAV…VANALAHRYH (145 aa). Positions 62 and 91 each coordinate heme b.

This sequence belongs to the globin family. In terms of assembly, heterotetramer of two alpha chains and two beta chains. Red blood cells.

Involved in oxygen transport from the lung to the various peripheral tissues. This is Hemoglobin subunit beta-A from Capra hircus (Goat).